Here is a 540-residue protein sequence, read N- to C-terminus: 2,3-bisphosphoglycerate-independent phosphoglycerate mutase (540 aa).

The Mn(2+) site is built by aspartate 13 and serine 63. The Phosphoserine intermediate role is filled by serine 63. Residues histidine 124, 154 to 155 (RD), arginine 186, arginine 192, 262 to 265 (RPDR), and lysine 356 each bind substrate. Aspartate 423, histidine 427, aspartate 464, histidine 465, and histidine 483 together coordinate Mn(2+).

This sequence belongs to the BPG-independent phosphoglycerate mutase family. In terms of assembly, monomer. It depends on Mn(2+) as a cofactor.

The enzyme catalyses (2R)-2-phosphoglycerate = (2R)-3-phosphoglycerate. It functions in the pathway carbohydrate degradation; glycolysis; pyruvate from D-glyceraldehyde 3-phosphate: step 3/5. In terms of biological role, catalyzes the interconversion of 2-phosphoglycerate and 3-phosphoglycerate. The sequence is that of 2,3-bisphosphoglycerate-independent phosphoglycerate mutase from Chloroflexus aurantiacus (strain ATCC 29366 / DSM 635 / J-10-fl).